The following is a 536-amino-acid chain: Nuclear hormone receptor family member nhr-7 (536 aa).

Positions 6–82 (NRICAVCGDT…VGMNPDYVRP (77 aa)) form a DNA-binding region, nuclear receptor. 2 NR C4-type zinc fingers span residues 9–29 (CAVC…CFGC) and 46–70 (CRFE…FRKC). An NR LBD domain is found at 155–378 (ADRSLARKTG…PFHKILTDII (224 aa)). Residues 427–465 (SPCQISAPPPPQQQYTDYSQMPSTSSYPANSSPFQSPYR) form a disordered region. Residues 439–465 (QQYTDYSQMPSTSSYPANSSPFQSPYR) show a composition bias toward polar residues.

It belongs to the nuclear hormone receptor family.

The protein resides in the nucleus. Functionally, orphan nuclear receptor. The chain is Nuclear hormone receptor family member nhr-7 (nhr-7) from Caenorhabditis elegans.